Reading from the N-terminus, the 341-residue chain is Fe-S cluster assembly protein DRE2 (341 aa).

The interval 1–157 (MNTLLLLHPT…FKKLSSPPTL (157 aa)) is N-terminal SAM-like domain. Residues 151–171 (LSSPPTLTDSSEADEDEESQL) are disordered. The segment at 157-204 (LTDSSEADEDEESQLNEKLKGSKLIYFDESSDDEIIDEDELLRDDDGA) is linker. A compositionally biased stretch (acidic residues) spans 161–170 (SEADEDEESQ). [2Fe-2S] cluster-binding residues include C215, C227, C230, and C232. Positions 215–232 (CALPNGKRRKKACKDCTC) are fe-S binding site A. Residues C304, C307, C315, and C318 each coordinate [4Fe-4S] cluster. 2 consecutive short sequence motifs (cx2C motif) follow at residues 304–307 (CGSC) and 315–318 (CDGC). A fe-S binding site B region spans residues 304–318 (CGSCALGDAFRCDGC).

The protein belongs to the anamorsin family. Monomer. Interacts with TAH18. Interacts with MIA40. Requires [2Fe-2S] cluster as cofactor. The cofactor is [4Fe-4S] cluster.

Its subcellular location is the cytoplasm. The protein localises to the mitochondrion intermembrane space. Its function is as follows. Component of the cytosolic iron-sulfur (Fe-S) protein assembly (CIA) machinery required for the maturation of extramitochondrial Fe-S proteins. Part of an electron transfer chain functioning in an early step of cytosolic Fe-S biogenesis, facilitating the de novo assembly of a [4Fe-4S] cluster on the scaffold complex CFD1-NBP35. Electrons are transferred to DRE2 from NADPH via the FAD- and FMN-containing protein TAH18. TAH18-DRE2 are also required for the assembly of the diferric tyrosyl radical cofactor of ribonucleotide reductase (RNR), probably by providing electrons for reduction during radical cofactor maturation in the catalytic small subunit RNR2. The chain is Fe-S cluster assembly protein DRE2 from Komagataella phaffii (strain GS115 / ATCC 20864) (Yeast).